The chain runs to 287 residues: Cyclopropane mycolic acid synthase 1 (287 aa).

S-adenosyl-L-methionine-binding positions include 33-34, 68-76, 94-99, and 123-124; these read YS, LLDVGCGWG, TLSKNQ, and WE. Cys269 is a catalytic residue.

It belongs to the CFA/CMAS family. Homodimer.

The protein localises to the cytoplasm. It catalyses the reaction a 1-acyl-2-(9Z)-enoyl-sn-glycero-3-phospholipid + S-adenosyl-L-methionine = a 1-acyl-2-(9-cyclopronane)-acyl-sn-glycero-3-phospholipid + S-adenosyl-L-homocysteine + H(+). It participates in lipid metabolism; mycolic acid biosynthesis. In terms of biological role, catalyzes the conversion of a double bond to a cyclopropane ring at the distal position of an alpha mycolic acid via the transfer of a methylene group from S-adenosyl-L-methionine. Cyclopropanated mycolic acids are key factors participating in cell envelope permeability, host immunomodulation and persistence. This Mycobacterium tuberculosis (strain CDC 1551 / Oshkosh) protein is Cyclopropane mycolic acid synthase 1 (cmaA1).